Here is a 776-residue protein sequence, read N- to C-terminus: Lysyl oxidase homolog 2 (776 aa).

The first 25 residues, 1–25, serve as a signal peptide directing secretion; it reads MEIPFGSCLYSCLALLVLLPSLSLA. SRCR domains follow at residues 61-162, 191-305, 329-428, and 438-546; these read VRLA…VVCS, IRPI…VSCV, VRLR…VRCN, and VRLN…VACS. Cystine bridges form between Cys87-Cys151, Cys100-Cys161, Cys131-Cys141, Cys221-Cys294, Cys234-Cys304, Cys268-Cys278, Cys354-Cys417, Cys367-Cys427, and Cys398-Cys408. N-linked (GlcNAc...) asparagine glycosylation is present at Asn267. Residue Asn291 is glycosylated (N-linked (GlcNAc...) asparagine). Asn458 is a glycosylation site (N-linked (GlcNAc...) asparagine). 3 disulfides stabilise this stretch: Cys467-Cys532, Cys480-Cys545, and Cys514-Cys524. Residues 550 to 753 are lysyl-oxidase like; that stretch reads PDLVLNAEIV…WMYNCHVGGA (204 aa). Residues Asp551 and Leu552 each coordinate Ca(2+). Intrachain disulfides connect Cys575-Cys627, Cys581-Cys697, Cys659-Cys675, and Cys665-Cys687. Positions 628, 630, and 632 each coordinate Cu cation. An N-linked (GlcNAc...) asparagine glycan is attached at Asn646. A cross-link (lysine tyrosylquinone (Lys-Tyr)) is located at residues 655–691; sequence KASFCLEDTECEGDIQKSYECANFGEQGITMGCWDMY. Tyr691 is modified (2',4',5'-topaquinone). Ca(2+)-binding residues include Glu724, Asp726, Asn729, and Asn730. Cys734 and Cys748 form a disulfide bridge.

It belongs to the lysyl oxidase family. In terms of assembly, component of some chromatin repressor complex. Interacts with SNAI1. Interacts with TAF10. Interacts with HSPA5. Interacts with EFEMP2. Cu cation is required as a cofactor. Lysine tyrosylquinone residue serves as cofactor. The lysine tyrosylquinone cross-link (LTQ) is generated by condensation of the epsilon-amino group of a lysine with a topaquinone produced by oxidation of tyrosine. Post-translationally, N-glycosylated. N-glycosylation on Asn-458 and Asn-646 may be essential for proper folding and secretion; may be composed of a fucosylated carbohydrates attached to a trimannose N-linked glycan core.

Its subcellular location is the secreted. The protein localises to the extracellular space. It localises to the extracellular matrix. The protein resides in the basement membrane. It is found in the nucleus. Its subcellular location is the chromosome. The protein localises to the endoplasmic reticulum. It carries out the reaction L-lysyl-[protein] + O2 + H2O = (S)-2-amino-6-oxohexanoyl-[protein] + H2O2 + NH4(+). Specifically inhibited by a mouse monoclonal antibody AB0023, inhibition occurs in a non-competitive manner. Its function is as follows. Mediates the post-translational oxidative deamination of lysine residues on target proteins leading to the formation of deaminated lysine (allysine). Acts as a transcription corepressor and specifically mediates deamination of trimethylated 'Lys-4' of histone H3 (H3K4me3), a specific tag for epigenetic transcriptional activation. Shows no activity against histone H3 when it is trimethylated on 'Lys-9' (H3K9me3) or 'Lys-27' (H3K27me3) or when 'Lys-4' is monomethylated (H3K4me1) or dimethylated (H3K4me2). Also mediates deamination of methylated TAF10, a member of the transcription factor IID (TFIID) complex, which induces release of TAF10 from promoters, leading to inhibition of TFIID-dependent transcription. LOXL2-mediated deamination of TAF10 results in transcriptional repression of genes required for embryonic stem cell pluripotency including POU5F1/OCT4, NANOG, KLF4 and SOX2. Involved in epithelial to mesenchymal transition (EMT) via interaction with SNAI1 and participates in repression of E-cadherin CDH1, probably by mediating deamination of histone H3. During EMT, involved with SNAI1 in negatively regulating pericentromeric heterochromatin transcription. SNAI1 recruits LOXL2 to pericentromeric regions to oxidize histone H3 and repress transcription which leads to release of heterochromatin component CBX5/HP1A, enabling chromatin reorganization and acquisition of mesenchymal traits. Interacts with the endoplasmic reticulum protein HSPA5 which activates the IRE1-XBP1 pathway of the unfolded protein response, leading to expression of several transcription factors involved in EMT and subsequent EMT induction. When secreted into the extracellular matrix, promotes cross-linking of extracellular matrix proteins by mediating oxidative deamination of peptidyl lysine residues in precursors to fibrous collagen and elastin. Acts as a regulator of sprouting angiogenesis, probably via collagen IV scaffolding. Acts as a regulator of chondrocyte differentiation, probably by regulating expression of factors that control chondrocyte differentiation. This chain is Lysyl oxidase homolog 2 (Loxl2), found in Rattus norvegicus (Rat).